Consider the following 362-residue polypeptide: Phosphoserine aminotransferase (362 aa).

R43 contributes to the L-glutamate binding site. Residues 77–78, W103, T153, D173, and Q196 contribute to the pyridoxal 5'-phosphate site; that span reads AT. At K197 the chain carries N6-(pyridoxal phosphate)lysine. Residue 238-239 coordinates pyridoxal 5'-phosphate; sequence NT.

The protein belongs to the class-V pyridoxal-phosphate-dependent aminotransferase family. SerC subfamily. As to quaternary structure, homodimer. Requires pyridoxal 5'-phosphate as cofactor.

The protein localises to the cytoplasm. The enzyme catalyses O-phospho-L-serine + 2-oxoglutarate = 3-phosphooxypyruvate + L-glutamate. The catalysed reaction is 4-(phosphooxy)-L-threonine + 2-oxoglutarate = (R)-3-hydroxy-2-oxo-4-phosphooxybutanoate + L-glutamate. The protein operates within amino-acid biosynthesis; L-serine biosynthesis; L-serine from 3-phospho-D-glycerate: step 2/3. It functions in the pathway cofactor biosynthesis; pyridoxine 5'-phosphate biosynthesis; pyridoxine 5'-phosphate from D-erythrose 4-phosphate: step 3/5. In terms of biological role, catalyzes the reversible conversion of 3-phosphohydroxypyruvate to phosphoserine and of 3-hydroxy-2-oxo-4-phosphonooxybutanoate to phosphohydroxythreonine. This Acidithiobacillus ferrooxidans (strain ATCC 23270 / DSM 14882 / CIP 104768 / NCIMB 8455) (Ferrobacillus ferrooxidans (strain ATCC 23270)) protein is Phosphoserine aminotransferase.